We begin with the raw amino-acid sequence, 543 residues long: Chaperonin GroEL (543 aa).

ATP is bound by residues 29 to 32, 86 to 90, Gly413, 476 to 478, and Asp492; these read TLGP, DGTTT, and NAA.

It belongs to the chaperonin (HSP60) family. In terms of assembly, forms a cylinder of 14 subunits composed of two heptameric rings stacked back-to-back. Interacts with the co-chaperonin GroES.

The protein localises to the cytoplasm. The catalysed reaction is ATP + H2O + a folded polypeptide = ADP + phosphate + an unfolded polypeptide.. Functionally, together with its co-chaperonin GroES, plays an essential role in assisting protein folding. The GroEL-GroES system forms a nano-cage that allows encapsulation of the non-native substrate proteins and provides a physical environment optimized to promote and accelerate protein folding. The chain is Chaperonin GroEL from Streptococcus pyogenes serotype M18 (strain MGAS8232).